The chain runs to 156 residues: Snaclec A5 (156 aa).

Residues 1–23 form the signal peptide; it reads MGRSISVSFGLLVVFLSLSGTGA. Disulfide bonds link Cys-27-Cys-38, Cys-55-Cys-154, and Cys-129-Cys-146. Residues 34-155 form the C-type lectin domain; it reads HEGHCYKVFN…CGKPYRFTCE (122 aa).

The protein belongs to the snaclec family. In terms of assembly, heterodimer; disulfide-linked. Expressed by the venom gland.

It is found in the secreted. Functionally, interferes with one step of hemostasis (modulation of platelet aggregation, or coagulation cascade, for example). The chain is Snaclec A5 from Macrovipera lebetinus (Levantine viper).